The sequence spans 143 residues: Holo-[acyl-carrier-protein] synthase (143 aa).

Positions 9 and 63 each coordinate Mg(2+).

This sequence belongs to the P-Pant transferase superfamily. AcpS family. Mg(2+) is required as a cofactor.

Its subcellular location is the cytoplasm. It carries out the reaction apo-[ACP] + CoA = holo-[ACP] + adenosine 3',5'-bisphosphate + H(+). Its function is as follows. Transfers the 4'-phosphopantetheine moiety from coenzyme A to a Ser of acyl-carrier-protein. The protein is Holo-[acyl-carrier-protein] synthase of Burkholderia pseudomallei (strain 668).